The sequence spans 355 residues: Erythronate-4-phosphate dehydrogenase (355 aa).

Ser45 and Thr66 together coordinate substrate. Asp146 serves as a coordination point for NAD(+). Arg206 is a catalytic residue. Residue Asp229 coordinates NAD(+). Glu234 is an active-site residue. His251 acts as the Proton donor in catalysis. NAD(+) is bound at residue Gly254. Tyr255 serves as a coordination point for substrate.

It belongs to the D-isomer specific 2-hydroxyacid dehydrogenase family. PdxB subfamily. As to quaternary structure, homodimer.

Its subcellular location is the cytoplasm. The enzyme catalyses 4-phospho-D-erythronate + NAD(+) = (R)-3-hydroxy-2-oxo-4-phosphooxybutanoate + NADH + H(+). The protein operates within cofactor biosynthesis; pyridoxine 5'-phosphate biosynthesis; pyridoxine 5'-phosphate from D-erythrose 4-phosphate: step 2/5. In terms of biological role, catalyzes the oxidation of erythronate-4-phosphate to 3-hydroxy-2-oxo-4-phosphonooxybutanoate. In Acinetobacter baumannii (strain AB307-0294), this protein is Erythronate-4-phosphate dehydrogenase.